The primary structure comprises 564 residues: Dihydroxy-acid dehydratase 2 (564 aa).

Position 59 (Cys-59) interacts with [2Fe-2S] cluster. Residue Asp-91 coordinates Mg(2+). A [2Fe-2S] cluster-binding site is contributed by Cys-132. 2 residues coordinate Mg(2+): Asp-133 and Lys-134. Lys-134 is modified (N6-carboxylysine). Cys-204 provides a ligand contact to [2Fe-2S] cluster. Mg(2+) is bound at residue Glu-454. Ser-480 serves as the catalytic Proton acceptor.

This sequence belongs to the IlvD/Edd family. Homodimer. [2Fe-2S] cluster is required as a cofactor. The cofactor is Mg(2+).

It catalyses the reaction (2R)-2,3-dihydroxy-3-methylbutanoate = 3-methyl-2-oxobutanoate + H2O. It carries out the reaction (2R,3R)-2,3-dihydroxy-3-methylpentanoate = (S)-3-methyl-2-oxopentanoate + H2O. It functions in the pathway amino-acid biosynthesis; L-isoleucine biosynthesis; L-isoleucine from 2-oxobutanoate: step 3/4. Its pathway is amino-acid biosynthesis; L-valine biosynthesis; L-valine from pyruvate: step 3/4. Its function is as follows. Functions in the biosynthesis of branched-chain amino acids. Catalyzes the dehydration of (2R,3R)-2,3-dihydroxy-3-methylpentanoate (2,3-dihydroxy-3-methylvalerate) into 2-oxo-3-methylpentanoate (2-oxo-3-methylvalerate) and of (2R)-2,3-dihydroxy-3-methylbutanoate (2,3-dihydroxyisovalerate) into 2-oxo-3-methylbutanoate (2-oxoisovalerate), the penultimate precursor to L-isoleucine and L-valine, respectively. The chain is Dihydroxy-acid dehydratase 2 from Staphylococcus saprophyticus subsp. saprophyticus (strain ATCC 15305 / DSM 20229 / NCIMB 8711 / NCTC 7292 / S-41).